The following is a 1043-amino-acid chain: Integrator complex subunit 3 (1043 aa).

Residue M1 is modified to N-acetylmethionine. A phosphoserine mark is found at S502, S537, and S995. Positions 977–1043 are disordered; that stretch reads YEDSSTKPPK…GSSAVGSDSD (67 aa). Positions 1008–1022 are enriched in acidic residues; it reads AEEESGSSSASEEED.

The protein belongs to the Integrator subunit 3 family. As to quaternary structure, component of the Integrator complex, composed of core subunits INTS1, INTS2, INTS3, INTS4, INTS5, INTS6, INTS7, INTS8, INTS9/RC74, INTS10, INTS11/CPSF3L, INTS12, INTS13, INTS14 and INTS15. The core complex associates with protein phosphatase 2A subunits PPP2CA and PPP2R1A, to form the Integrator-PP2A (INTAC) complex. Component of the SOSS complex, composed of SOSS-B (SOSS-B1/NABP2 or SOSS-B2/NABP1), SOSS-A/INTS3 and SOSS-C/INIP. SOSS complexes containing SOSS-B1/NABP2 are more abundant than complexes containing SOSS-B2/NABP1. Interacts with SOSS-B1/NABP2, SOSS-B2/NABP1 and SOSS-C/INIP; the interaction is direct. Interacts with NBN/NBS1.

The protein localises to the nucleus. The protein resides in the cytoplasm. Functionally, component of the integrator complex, a multiprotein complex that terminates RNA polymerase II (Pol II) transcription in the promoter-proximal region of genes. The integrator complex provides a quality checkpoint during transcription elongation by driving premature transcription termination of transcripts that are unfavorably configured for transcriptional elongation: the complex terminates transcription by (1) catalyzing dephosphorylation of the C-terminal domain (CTD) of Pol II subunit POLR2A/RPB1 and SUPT5H/SPT5, (2) degrading the exiting nascent RNA transcript via endonuclease activity and (3) promoting the release of Pol II from bound DNA. The integrator complex is also involved in terminating the synthesis of non-coding Pol II transcripts, such as enhancer RNAs (eRNAs), small nuclear RNAs (snRNAs), telomerase RNAs and long non-coding RNAs (lncRNAs). Within the integrator complex, INTS3 is involved in the post-termination step: INTS3 binds INTS7 in the open conformation of integrator complex and prevents the rebinding of Pol II to the integrator after termination cycle. Mediates recruitment of cytoplasmic dynein to the nuclear envelope, probably as component of the integrator complex. Its function is as follows. Component of the SOSS complex, a multiprotein complex that functions downstream of the MRN complex to promote DNA repair and G2/M checkpoint. The SOSS complex associates with single-stranded DNA at DNA lesions and influences diverse endpoints in the cellular DNA damage response including cell-cycle checkpoint activation, recombinational repair and maintenance of genomic stability. The SOSS complex is required for efficient homologous recombination-dependent repair of double-strand breaks (DSBs) and ATM-dependent signaling pathways. In the SOSS complex, it is required for the assembly of the complex and for stabilization of the complex at DNA damage sites. This is Integrator complex subunit 3 (INTS3) from Pongo abelii (Sumatran orangutan).